Here is a 144-residue protein sequence, read N- to C-terminus: MVSKKNTAEISAKDIWENIWSGVSSLLDFFAVLENLGVVNDKLYVSGLLRKVWLCYSCISVIKCVWKLIKLCKVKFKIDQRLDGEGNGLVKDKLINFKKKYNEHIRHITAALLQDLSYLMVLIYPGTRLFKRLSNIITLCRIIV.

3 helical membrane passes run 18–30 (NIWS…LDFF), 52–73 (VWLC…KLCK), and 109–131 (TAAL…RLFK).

In terms of assembly, homooligomer. Interacts with PEX11, PEX25 and PEX27.

It is found in the peroxisome membrane. In terms of biological role, in concert with the three peroxisome divisional factors, PEX11, PEX25 and PEX27, controls peroxisome morphology and abundance under conditions of peroxisome proliferation. Maintains mature peroxisomes in actively dividing cells. The protein is Peroxisomal membrane protein PEX34 (PEX34) of Saccharomyces cerevisiae (strain ATCC 204508 / S288c) (Baker's yeast).